We begin with the raw amino-acid sequence, 369 residues long: Deoxyhypusine synthase (369 aa).

Position 78 is a phosphoserine (Ser78). Residues 105-109 (SNLIS), 131-133 (TAG), Glu137, and Asp238 each bind NAD(+). Position 136-137 (136-137 (EE)) interacts with spermidine. Asp243 contacts spermidine. Residue Gly283 participates in NAD(+) binding. His288 lines the spermidine pocket. 308 to 309 (TA) provides a ligand contact to NAD(+). Spermidine is bound by residues 314–316 (GSD) and 323–329 (EAVSWGK). The active-site Nucleophile is Lys329. 342-343 (DA) lines the NAD(+) pocket.

It belongs to the deoxyhypusine synthase family. In terms of assembly, homotetramer formed by a dimer of dimers. NAD(+) is required as a cofactor.

It carries out the reaction [eIF5A protein]-L-lysine + spermidine = [eIF5A protein]-deoxyhypusine + propane-1,3-diamine. It participates in protein modification; eIF5A hypusination. Catalyzes the NAD-dependent oxidative cleavage of spermidine and the subsequent transfer of the butylamine moiety of spermidine to the epsilon-amino group of a critical lysine residue of the eIF-5A precursor protein to form the intermediate deoxyhypusine residue. This is the first step of the post-translational modification of that lysine into an unusual amino acid residue named hypusine. Hypusination is unique to mature eIF-5A factor and is essential for its function. This chain is Deoxyhypusine synthase (DHPS), found in Homo sapiens (Human).